A 330-amino-acid chain; its full sequence is Free fatty acid receptor 2 (330 aa).

The Extracellular portion of the chain corresponds to 1–8 (MTPDWHSS). The helical transmembrane segment at 9–29 (LILTAYILIFLTGLPANLLAL) threads the bilayer. The Cytoplasmic portion of the chain corresponds to 30-43 (RAFVSRVRQPQPAP). Residues 44–64 (VHILLLNLTLADLLLLLLLPF) traverse the membrane as a helical segment. At 65-79 (RIVEAASNFRWYLPK) the chain is on the extracellular side. Residues 80–100 (IVCALTGFGFYSSIYCSTWLL) traverse the membrane as a helical segment. Over 101 to 126 (AGISIERYLGVAFPVQYKLSRRPLYG) the chain is Cytoplasmic. A helical transmembrane segment spans residues 127–147 (VIAALVAWIMSFGHCTIVIIV). The Extracellular portion of the chain corresponds to 148-184 (QYLNSTEQVGTENQITCYENFTQAQLDVVLPVRLELC). Residues Asn151 and Asn167 are each glycosylated (N-linked (GlcNAc...) asparagine). The chain crosses the membrane as a helical span at residues 185–205 (LVLFFVPMTVTIFCYWRFVWI). Residues 206-219 (MLTQPHVGAQRRRR) lie on the Cytoplasmic side of the membrane. A helical transmembrane segment spans residues 220 to 240 (AVGLAVVTLLNFLVCFGPYNM). The Extracellular portion of the chain corresponds to 241-255 (SHLVGFHLRQSPSWR). A helical membrane pass occupies residues 256 to 276 (VEAVVFSSLNASLDPLLFYFS). Topologically, residues 277 to 330 (SSVVRRAFGKGLLLLRNPGSSMLGRGAEETVEGTKTDRGGSQTEGAQSSDFVTE) are cytoplasmic. The disordered stretch occupies residues 300–330 (GRGAEETVEGTKTDRGGSQTEGAQSSDFVTE). Residues 302 to 314 (GAEETVEGTKTDR) show a composition bias toward basic and acidic residues. Residues 315–330 (GGSQTEGAQSSDFVTE) are compositionally biased toward polar residues.

This sequence belongs to the G-protein coupled receptor 1 family. Interacts with FCN1 (via Fibrinogen C-terminal domain). As to expression, detected in whole wall and separated mucosa in the distal ileum and colon. Expressed by enteroendocrine cells expressing peptide YY (PYY) (at protein level).

The protein localises to the cell membrane. Functionally, g protein-coupled receptor that is activated by a major product of dietary fiber digestion, the short chain fatty acids (SCFAs), and that plays a role in the regulation of whole-body energy homeostasis and in intestinal immunity. In omnivorous mammals, the short chain fatty acids acetate, propionate and butyrate are produced primarily by the gut microbiome that metabolizes dietary fibers. SCFAs serve as a source of energy but also act as signaling molecules. That G protein-coupled receptor is probably coupled to the pertussis toxin-sensitive, G(i/o)-alpha family of G proteins but also to the Gq family. Its activation results in the formation of inositol 1,4,5-trisphosphate, the mobilization of intracellular calcium, the phosphorylation of the MAPK3/ERK1 and MAPK1/ERK2 kinases and the inhibition of intracellular cAMP accumulation. May play a role in glucose homeostasis by regulating the secretion of GLP-1, in response to short-chain fatty acids accumulating in the intestine. May also regulate the production of LEP/Leptin, a hormone acting on the central nervous system to inhibit food intake. Finally, may also regulate whole-body energy homeostasis through adipogenesis regulating both differentiation and lipid storage of adipocytes. In parallel to its role in energy homeostasis, may also mediate the activation of the inflammatory and immune responses by SCFA in the intestine, regulating the rapid production of chemokines and cytokines. May also play a role in the resolution of the inflammatory response and control chemotaxis in neutrophils. In addition to SCFAs, may also be activated by the extracellular lectin FCN1 in a process leading to activation of monocytes and inducing the secretion of interleukin-8/IL-8 in response to the presence of microbes. The protein is Free fatty acid receptor 2 (Ffar2) of Rattus norvegicus (Rat).